A 367-amino-acid chain; its full sequence is 2-aminoethylphosphonate--pyruvate transaminase (367 aa).

The residue at position 194 (Lys194) is an N6-(pyridoxal phosphate)lysine.

Belongs to the class-V pyridoxal-phosphate-dependent aminotransferase family. PhnW subfamily. As to quaternary structure, homodimer. Pyridoxal 5'-phosphate is required as a cofactor.

The enzyme catalyses (2-aminoethyl)phosphonate + pyruvate = phosphonoacetaldehyde + L-alanine. In terms of biological role, involved in phosphonate degradation. This chain is 2-aminoethylphosphonate--pyruvate transaminase, found in Salmonella agona (strain SL483).